The following is a 100-amino-acid chain: Biogenesis of lysosome-related organelles complex 1 subunit CNL1 (100 aa).

Residues 25-46 adopt a coiled-coil conformation; that stretch reads SDRVKSLELEATRLVQRQNELV.

Belongs to the BLOC1S4 family. As to quaternary structure, component of the biogenesis of lysosome-related organelles complex-1 (BLOC-1).

It is found in the cytoplasm. In terms of biological role, component of the biogenesis of lysosome-related organelles complex-1 (BLOC-1), a complex that is involved in endosomal cargo sorting. The protein is Biogenesis of lysosome-related organelles complex 1 subunit CNL1 (CLN1) of Candida glabrata (strain ATCC 2001 / BCRC 20586 / JCM 3761 / NBRC 0622 / NRRL Y-65 / CBS 138) (Yeast).